Here is a 274-residue protein sequence, read N- to C-terminus: Diaminopimelate epimerase (274 aa).

Residues N11, Q44, and N64 each contribute to the substrate site. C73 functions as the Proton donor in the catalytic mechanism. Substrate contacts are provided by residues 74–75 (GN), N157, N190, and 208–209 (ER). Catalysis depends on C217, which acts as the Proton acceptor. Position 218–219 (218–219 (GS)) interacts with substrate.

It belongs to the diaminopimelate epimerase family. Homodimer.

Its subcellular location is the cytoplasm. The enzyme catalyses (2S,6S)-2,6-diaminopimelate = meso-2,6-diaminopimelate. It participates in amino-acid biosynthesis; L-lysine biosynthesis via DAP pathway; DL-2,6-diaminopimelate from LL-2,6-diaminopimelate: step 1/1. Its function is as follows. Catalyzes the stereoinversion of LL-2,6-diaminopimelate (L,L-DAP) to meso-diaminopimelate (meso-DAP), a precursor of L-lysine and an essential component of the bacterial peptidoglycan. The polypeptide is Diaminopimelate epimerase (Shigella flexneri serotype 5b (strain 8401)).